A 549-amino-acid polypeptide reads, in one-letter code: MPVDLGQALGLLPSLAKAEDSQFSESDAALQEELSSPETARQLFRQFRYQVMSGPHETLKQLRKLCFQWLQPEVHTKEQILEILMLEQFLTILPGEIQMWVRKQCPGSGEEAVTLVESLKGDPQRLWQWISIQVLGQDILSEKMESPSCQVGEVEPHLEVVPQELGLENSSSGPGELLSHIVKEESDTEAELALAASQPARLEERLIRDQDLGASLLPAAPQEQWRQLDSTQKEQYWDLMLETYGKMVSGAGISHPKSDLTNSIEFGEELAGIYLHVNEKIPRPTCIGDRQENDKENLNLENHRDQELLHASCQASGEVPSQASLRGFFTEDEPGCFGEGENLPEALQNIQDEGTGEQLSPQERISEKQLGQHLPNPHSGEMSTMWLEEKRETSQKGQPRAPMAQKLPTCRECGKTFYRNSQLIFHQRTHTGETYFQCTICKKAFLRSSDFVKHQRTHTGEKPCKCDYCGKGFSDFSGLRHHEKIHTGEKPYKCPICEKSFIQRSNFNRHQRVHTGEKPYKCSHCGKSFSWSSSLDKHQRSHLGKKPFQ.

The SCAN box domain maps to 41-123 (RQLFRQFRYQ…TLVESLKGDP (83 aa)). The KRAB domain maps to 211-283 (DLGASLLPAA…YLHVNEKIPR (73 aa)). C2H2-type zinc fingers lie at residues 408 to 430 (PTCR…QRTH), 436 to 458 (FQCT…QRTH), 464 to 486 (CKCD…EKIH), 492 to 514 (YKCP…QRVH), and 520 to 542 (YKCS…QRSH).

Belongs to the krueppel C2H2-type zinc-finger protein family.

It localises to the nucleus. Functionally, may be involved in transcriptional regulation. The protein is Zinc finger protein 18 (ZNF18) of Homo sapiens (Human).